Reading from the N-terminus, the 199-residue chain is Peroxiredoxin 2 (199 aa).

The Thioredoxin domain occupies 8–166 (AFIGQPAPNF…TLRLIQAFQF (159 aa)). Cys-53 functions as the Cysteine sulfenic acid (-SOH) intermediate in the catalytic mechanism.

This sequence belongs to the peroxiredoxin family. AhpC/Prx1 subfamily. In terms of assembly, homodimer; disulfide-linked, upon oxidation.

It catalyses the reaction a hydroperoxide + [thioredoxin]-dithiol = an alcohol + [thioredoxin]-disulfide + H2O. Thiol-specific peroxidase that catalyzes the reduction of hydrogen peroxide and organic hydroperoxides to water and alcohols, respectively. Plays a role in cell protection against oxidative stress by detoxifying peroxides and as sensor of hydrogen peroxide-mediated signaling events. This chain is Peroxiredoxin 2 (tsa-2), found in Brugia malayi (Filarial nematode worm).